A 201-amino-acid polypeptide reads, in one-letter code: Recombination protein RecR (201 aa).

The C4-type zinc-finger motif lies at 57–72; the sequence is CADCRTFTEQEVCNIC. Residues 81–176 enclose the Toprim domain; that stretch reads GQICVVESPA…EASRIAHGVP (96 aa).

The protein belongs to the RecR family.

Its function is as follows. May play a role in DNA repair. It seems to be involved in an RecBC-independent recombinational process of DNA repair. It may act with RecF and RecO. This Escherichia coli O6:K15:H31 (strain 536 / UPEC) protein is Recombination protein RecR.